A 333-amino-acid chain; its full sequence is Isoaspartyl peptidase/L-asparaginase (333 aa).

The Nucleophile role is filled by threonine 191. Substrate-binding positions include 219-222 (RVGD) and 242-245 (TGHG).

It belongs to the Ntn-hydrolase family. Heterodimer of an alpha and beta chain produced by autocleavage. This heterodimer may then dimerize in turn, giving rise to a heterotetramer. Post-translationally, cleaved into an alpha and beta chain by autocatalysis; this activates the enzyme. The N-terminal residue of the beta subunit is responsible for the nucleophile hydrolase activity. As to expression, present in testis, brain, liver, kidney, heart and skeletal muscle. In brain, specifically present in the astrocytic lineage. Present in sperm (at protein level).

The protein localises to the cytoplasm. The enzyme catalyses L-asparagine + H2O = L-aspartate + NH4(+). It catalyses the reaction Cleavage of a beta-linked Asp residue from the N-terminus of a polypeptide.. Functionally, has both L-asparaginase and beta-aspartyl peptidase activity. Is highly active with L-Asp beta-methyl ester. Besides, has catalytic activity toward beta-aspartyl dipeptides and their methyl esters, including beta-L-Asp-L-Phe, beta-L-Asp-L-Phe methyl ester (aspartame), beta-L-Asp-L-Ala, beta-L-Asp-L-Leu and beta-L-Asp-L-Lys. Does not have aspartylglucosaminidase activity and is inactive toward GlcNAc-L-Asn. Likewise, has no activity toward glutamine. May be involved in the production of L-aspartate, which can act as an excitatory neurotransmitter in some brain regions. This chain is Isoaspartyl peptidase/L-asparaginase (Asrgl1), found in Rattus norvegicus (Rat).